A 648-amino-acid chain; its full sequence is Calpain-5 (648 aa).

One can recognise a Calpain catalytic domain in the interval 28-353 (PFVDTLFPPT…FTDISLCQLF (326 aa)). Active-site residues include cysteine 83, histidine 252, and asparagine 290. A domain III region spans residues 354 to 509 (NTSVFSFSRS…VYSDEHIHFS (156 aa)). The 124-residue stretch at 502–625 (SDEHIHFSPL…ENRDTTLQLT (124 aa)) folds into the C2 domain.

The protein belongs to the peptidase C2 family. It depends on Ca(2+) as a cofactor. As to expression, expressed in neuronal, but not in GABA-ergic neurons, intestinal, hypodermal and excretory tissues.

Functionally, required for the correct female sexual development of the soma and germline in hermaphrodite animals, while being fully dispensable in males. Has calcium-dependent proteolytic activity and is involved in the cleavage of tra-2, for which it acts as a potentiator. Capable of calcium-dependent autolysis. Part of the necrosis cell death pathway. Required for necrosis of intestinal cells induced by B.thuringiensis endotoxin Cry6Aa. This is Calpain-5 from Caenorhabditis elegans.